A 42-amino-acid chain; its full sequence is Photosystem II reaction center protein J (42 aa).

A helical membrane pass occupies residues 10–30; that stretch reads IPLWLVGTVVGTLAIGLLAVF.

Belongs to the PsbJ family. PSII is composed of 1 copy each of membrane proteins PsbA, PsbB, PsbC, PsbD, PsbE, PsbF, PsbH, PsbI, PsbJ, PsbK, PsbL, PsbM, PsbT, PsbX, PsbY, PsbZ, Psb30/Ycf12, at least 3 peripheral proteins of the oxygen-evolving complex and a large number of cofactors. It forms dimeric complexes.

The protein resides in the plastid. It is found in the chloroplast thylakoid membrane. In terms of biological role, one of the components of the core complex of photosystem II (PSII). PSII is a light-driven water:plastoquinone oxidoreductase that uses light energy to abstract electrons from H(2)O, generating O(2) and a proton gradient subsequently used for ATP formation. It consists of a core antenna complex that captures photons, and an electron transfer chain that converts photonic excitation into a charge separation. This chain is Photosystem II reaction center protein J, found in Chlamydomonas reinhardtii (Chlamydomonas smithii).